Here is a 159-residue protein sequence, read N- to C-terminus: Cyclic pyranopterin monophosphate synthase (159 aa).

Substrate-binding positions include 76 to 78 (LCH) and 114 to 115 (ME). Asp129 is an active-site residue.

It belongs to the MoaC family. In terms of assembly, homohexamer; trimer of dimers.

The enzyme catalyses (8S)-3',8-cyclo-7,8-dihydroguanosine 5'-triphosphate = cyclic pyranopterin phosphate + diphosphate. It participates in cofactor biosynthesis; molybdopterin biosynthesis. Functionally, catalyzes the conversion of (8S)-3',8-cyclo-7,8-dihydroguanosine 5'-triphosphate to cyclic pyranopterin monophosphate (cPMP). In Shewanella oneidensis (strain ATCC 700550 / JCM 31522 / CIP 106686 / LMG 19005 / NCIMB 14063 / MR-1), this protein is Cyclic pyranopterin monophosphate synthase.